The primary structure comprises 490 residues: Adenylyltransferase and sulfurtransferase uba4 (490 aa).

The disordered stretch occupies residues 33 to 54 (EAAKTPPYSDSTETDRGSSSST). ATP contacts are provided by residues glycine 96, aspartate 117, 124–128 (SNLHR), lysine 141, and 185–186 (DH). Positions 234 and 237 each coordinate Zn(2+). Catalysis depends on cysteine 251, which acts as the Glycyl thioester intermediate; for adenylyltransferase activity. The Zn(2+) site is built by cysteine 323 and cysteine 326. The region spanning 379 to 488 (EHGKPVLLDV…WKREVDSTLP (110 aa)) is the Rhodanese domain. The Cysteine persulfide intermediate; for sulfurtransferase activity role is filled by cysteine 443.

In the N-terminal section; belongs to the HesA/MoeB/ThiF family. UBA4 subfamily. Zn(2+) is required as a cofactor.

The protein localises to the cytoplasm. It localises to the cytosol. The enzyme catalyses [molybdopterin-synthase sulfur-carrier protein]-C-terminal Gly-Gly + ATP + H(+) = [molybdopterin-synthase sulfur-carrier protein]-C-terminal Gly-Gly-AMP + diphosphate. It catalyses the reaction [molybdopterin-synthase sulfur-carrier protein]-C-terminal Gly-Gly-AMP + S-sulfanyl-L-cysteinyl-[cysteine desulfurase] + AH2 = [molybdopterin-synthase sulfur-carrier protein]-C-terminal-Gly-aminoethanethioate + L-cysteinyl-[cysteine desulfurase] + A + AMP + 2 H(+). The protein operates within tRNA modification; 5-methoxycarbonylmethyl-2-thiouridine-tRNA biosynthesis. Plays a central role in 2-thiolation of mcm(5)S(2)U at tRNA wobble positions of cytosolic tRNA(Lys), tRNA(Glu) and tRNA(Gln). Also essential during biosynthesis of the molybdenum cofactor. Acts by mediating the C-terminal thiocarboxylation of sulfur carriers URM1 and MOCS2A. Its N-terminus first activates urm1 and MOCS2A as acyl-adenylates (-COAMP), then the persulfide sulfur on the catalytic cysteine is transferred to URM1 and MOCS2A to form thiocarboxylation (-COSH) of their C-terminus. The reaction probably involves hydrogen sulfide that is generated from the persulfide intermediate and that acts as a nucleophile towards URM1 and MOCS2A. Subsequently, a transient disulfide bond is formed. Does not use thiosulfate as sulfur donor; NFS1 probably acting as a sulfur donor for thiocarboxylation reactions. The sequence is that of Adenylyltransferase and sulfurtransferase uba4 from Pyricularia oryzae (strain 70-15 / ATCC MYA-4617 / FGSC 8958) (Rice blast fungus).